The primary structure comprises 395 residues: tRNA-specific 2-thiouridylase MnmA (395 aa).

ATP-binding positions include 7 to 14 and Met-33; that span reads GLSGGVDS. An interaction with target base in tRNA region spans residues 95 to 97; sequence NPD. Residue Cys-100 is the Nucleophile of the active site. An intrachain disulfide couples Cys-100 to Cys-200. Gly-124 contributes to the ATP binding site. Residues 150 to 152 are interaction with tRNA; it reads KDQ. The active-site Cysteine persulfide intermediate is Cys-200. An interaction with tRNA region spans residues 346–347; the sequence is RY.

Belongs to the MnmA/TRMU family.

It is found in the cytoplasm. It catalyses the reaction S-sulfanyl-L-cysteinyl-[protein] + uridine(34) in tRNA + AH2 + ATP = 2-thiouridine(34) in tRNA + L-cysteinyl-[protein] + A + AMP + diphosphate + H(+). In terms of biological role, catalyzes the 2-thiolation of uridine at the wobble position (U34) of tRNA, leading to the formation of s(2)U34. The sequence is that of tRNA-specific 2-thiouridylase MnmA from Christiangramia forsetii (strain DSM 17595 / CGMCC 1.15422 / KT0803) (Gramella forsetii).